We begin with the raw amino-acid sequence, 148 residues long: IQ domain-containing protein F5 (148 aa).

2 consecutive IQ domains span residues 11-40 and 67-96; these read ERSA…RAWI and QEWA…AVRI.

The chain is IQ domain-containing protein F5 (IQCF5) from Homo sapiens (Human).